Here is a 658-residue protein sequence, read N- to C-terminus: MTATIIAAITITTIVIITPMEEITTMTIPMEEITTMTIPMEEITTMTIPMEEITTMTTPMEEITTITTPMEETTTITPMVETTTILPMAAMTTPMVETTTIPTVETTTTPMVETTTITPMVETTTITPMVEAMITLMEETMTTPMEETTTILPMAAMTTPMEETTTTTPMVETTTIPTVETMTTPMVEAMTILPMAAMTTPMEETTTTPMEETTTTPMVETMITPMVEAMTTPTEVVGRSMVSTIRTTTPMEAMITPTVETTTLPTAAMTTPVEETTTTPMVETMITPTVVTTTTPMVETMITPTVVTTTPMVILVMAVVMETTINIVGNNDSIPSQNFKSGKTFVSNANSSNSNDGSSSKSLDVGSFVNAFKQLNVNDNSSNNNSSGNTDSSTIGYAAVFAAAGKFFSQHSCDLASGNKSAQEGQNQFLSMVESEAKNLMNKTNYSANQSQNGNSQNSGNPVSQAIDLAKSLFQNRNLLTKLAQSGVLTNAAQGSSGGLSAAAVSGLIGSFMGSSSNNSNSSNNNSNTSNNNSNTSNNESMVSKLSSLSGMASSFLGSSGNNNNNNNSNSGNYNNNNSGNNNQQHQQSSSSLQGLASSFLNSSSGNSNKQNYNNNNNQNYGNNNNQNYNNNNNSSQGGNSQGGSGLLGQAVNMFLKS.

Positions 516-639 (SSNNSNSSNN…NNNNNSSQGG (124 aa)) are enriched in low complexity. Residues 516 to 646 (SSNNSNSSNN…QGGNSQGGSG (131 aa)) form a disordered region.

The protein localises to the cytoplasm. This is an uncharacterized protein from Schizosaccharomyces pombe (strain 972 / ATCC 24843) (Fission yeast).